Consider the following 284-residue polypeptide: Lipase chaperone (284 aa).

A helical membrane pass occupies residues 4 to 24; it reads IAWSLGILVTIGALCAIVWPS.

It belongs to the lipase chaperone family.

It is found in the cell inner membrane. Its function is as follows. May be involved in the folding of the extracellular lipase during its passage through the periplasm. This Vibrio cholerae serotype O1 (strain ATCC 39315 / El Tor Inaba N16961) protein is Lipase chaperone (lifO).